The sequence spans 1857 residues: Phosphatidylinositol 3-kinase 2 (1857 aa).

Composition is skewed to low complexity over residues 1–32 (MKMSEGIISPLSLSSESSEQQQAAIRKFSNGS) and 42–55 (NLSVNSSNSGSNNS). Disordered regions lie at residues 1 to 61 (MKMS…KSST), 145 to 313 (TPLN…TNRV), 348 to 468 (SSSK…NSIR), 481 to 512 (ISSNGIPSSPGQVSNKDYNNIGNLSNSSGERV), and 530 to 573 (ESDI…GPNV). The segment covering 145–155 (TPLNRSRSGSI) has biased composition (polar residues). Positions 162–269 (NNLTSSSSSS…NNNNNNNSNS (108 aa)) are enriched in low complexity. A compositionally biased stretch (polar residues) spans 270-281 (GGSSRMITSKSQ). Low complexity-rich tracts occupy residues 288–311 (TSNTAATTTTTTTTNTSAPTTPTN) and 352–464 (LLIP…QPSN). Residues 533–560 (ISSSPRSIGSPNSIRASISSQLPPSLSS) show a composition bias toward low complexity. Over residues 561–570 (IGGGGGGGSG) the composition is skewed to gly residues. The region spanning 821 to 934 (PNKITIMVLL…NQTVELSLTN (114 aa)) is the PI3K-RBD domain. The interval 996–1078 (KETNKENKDS…SGSGNGSEQP (83 aa)) is disordered. A compositionally biased stretch (basic and acidic residues) spans 997-1011 (ETNKENKDSNKENKD). The segment covering 1012-1056 (SSSNNNNNNNNNNNNNNNNNNNNNNNNNNNGNNNGNNSNNNSNSN) has biased composition (low complexity). Residues 1099-1271 (VKRLFRVNIA…QPIILLVEFE (173 aa)) form the C2 PI3K-type domain. In terms of domain architecture, PIK helical spans 1326 to 1503 (PVGLKKLDLD…GLLLEGYLRS (178 aa)). Residues 1568 to 1845 (IIDKCRYMDS…NISVALNTKT (278 aa)) form the PI3K/PI4K catalytic domain. Residues 1574 to 1580 (YMDSKKL) are G-loop. The interval 1711-1719 (GIGDRHSDN) is catalytic loop. Positions 1730–1756 (HIDFGHFLGNYKKKYGFKRERAPFIFT) are activation loop.

It belongs to the PI3/PI4-kinase family.

It catalyses the reaction a 1,2-diacyl-sn-glycero-3-phospho-(1D-myo-inositol) + ATP = a 1,2-diacyl-sn-glycero-3-phospho-(1D-myo-inositol-3-phosphate) + ADP + H(+). The polypeptide is Phosphatidylinositol 3-kinase 2 (pikB) (Dictyostelium discoideum (Social amoeba)).